Reading from the N-terminus, the 246-residue chain is tRNA (guanine-N(7)-)-methyltransferase (246 aa).

Residues E77, E102, D129, and D152 each coordinate S-adenosyl-L-methionine. D152 is a catalytic residue. Residues K156, D188, and 225 to 228 contribute to the substrate site; that span reads TKFE.

The protein belongs to the class I-like SAM-binding methyltransferase superfamily. TrmB family.

It catalyses the reaction guanosine(46) in tRNA + S-adenosyl-L-methionine = N(7)-methylguanosine(46) in tRNA + S-adenosyl-L-homocysteine. Its pathway is tRNA modification; N(7)-methylguanine-tRNA biosynthesis. Catalyzes the formation of N(7)-methylguanine at position 46 (m7G46) in tRNA. This is tRNA (guanine-N(7)-)-methyltransferase from Haemophilus influenzae (strain ATCC 51907 / DSM 11121 / KW20 / Rd).